The primary structure comprises 189 residues: UPF0301 protein RMA_0049 (189 aa).

This sequence belongs to the UPF0301 (AlgH) family.

In Rickettsia massiliae (strain Mtu5), this protein is UPF0301 protein RMA_0049.